We begin with the raw amino-acid sequence, 956 residues long: Glycine dehydrogenase (decarboxylating) 2 (956 aa).

Lys-706 carries the N6-(pyridoxal phosphate)lysine modification.

Belongs to the GcvP family. The glycine cleavage system is composed of four proteins: P, T, L and H. It depends on pyridoxal 5'-phosphate as a cofactor.

It carries out the reaction N(6)-[(R)-lipoyl]-L-lysyl-[glycine-cleavage complex H protein] + glycine + H(+) = N(6)-[(R)-S(8)-aminomethyldihydrolipoyl]-L-lysyl-[glycine-cleavage complex H protein] + CO2. Its function is as follows. The glycine cleavage system catalyzes the degradation of glycine. The P protein binds the alpha-amino group of glycine through its pyridoxal phosphate cofactor; CO(2) is released and the remaining methylamine moiety is then transferred to the lipoamide cofactor of the H protein. The chain is Glycine dehydrogenase (decarboxylating) 2 from Colwellia psychrerythraea (strain 34H / ATCC BAA-681) (Vibrio psychroerythus).